Here is a 120-residue protein sequence, read N- to C-terminus: Flagellar protein FliT (120 aa).

Residues 1 to 50 are required for homodimerization; it reads MERHQHLLSEYQQILTLSEQMLVLATEGNWDALVDLEMTYLKAVESTANI. Residues 60–98 are fliD binding; that stretch reads LQDLLREKLRAILDNEIEIKRLLQLRLDRLSDLVGQSTK.

The protein belongs to the FliT family. As to quaternary structure, homodimer. Interacts with FliD and FlhC.

The protein resides in the cytoplasm. It is found in the cytosol. Functionally, dual-function protein that regulates the transcription of class 2 flagellar operons and that also acts as an export chaperone for the filament-capping protein FliD. As a transcriptional regulator, acts as an anti-FlhDC factor; it directly binds FlhC, thus inhibiting the binding of the FlhC/FlhD complex to class 2 promoters, resulting in decreased expression of class 2 flagellar operons. As a chaperone, effects FliD transition to the membrane by preventing its premature polymerization, and by directing it to the export apparatus. The polypeptide is Flagellar protein FliT (Yersinia enterocolitica serotype O:8 / biotype 1B (strain NCTC 13174 / 8081)).